Consider the following 228-residue polypeptide: Superoxide dismutase [Mn], mitochondrial (228 aa).

The N-terminal 24 residues, 1–24 (MALRNLMTKKPFAGILTFRQQLRC), are a transit peptide targeting the mitochondrion. Residues H52, H100, D189, and H193 each contribute to the Mn(2+) site.

The protein belongs to the iron/manganese superoxide dismutase family. As to quaternary structure, homotetramer. It depends on Mn(2+) as a cofactor.

The protein resides in the mitochondrion matrix. The catalysed reaction is 2 superoxide + 2 H(+) = H2O2 + O2. Destroys superoxide anion radicals which are normally produced within the cells and which are toxic to biological systems. The chain is Superoxide dismutase [Mn], mitochondrial (SODA) from Capsicum annuum (Capsicum pepper).